The following is a 525-amino-acid chain: GMP synthase [glutamine-hydrolyzing] (525 aa).

Residues 9–207 (RILILDFGSQ…VRDICQCEAL (199 aa)) enclose the Glutamine amidotransferase type-1 domain. Residue Cys86 is the Nucleophile of the active site. Residues His181 and Glu183 contribute to the active site. Residues 208-400 (WTPAKIIDDA…LGLPYDMLYR (193 aa)) form the GMPS ATP-PPase domain. 235 to 241 (SGGVDSS) serves as a coordination point for ATP.

Homodimer.

It carries out the reaction XMP + L-glutamine + ATP + H2O = GMP + L-glutamate + AMP + diphosphate + 2 H(+). It functions in the pathway purine metabolism; GMP biosynthesis; GMP from XMP (L-Gln route): step 1/1. Its function is as follows. Catalyzes the synthesis of GMP from XMP. This chain is GMP synthase [glutamine-hydrolyzing], found in Salmonella schwarzengrund (strain CVM19633).